The primary structure comprises 21 residues: Thioredoxin (21 aa).

Position 3 is an N6-acetyllysine (Lys3). The residue at position 8 (Lys8) is an N6-succinyllysine.

Belongs to the thioredoxin family. Homodimer; disulfide-linked. Interacts with TXNIP through the redox-active site. Interacts with MAP3K5 and CASP3. Interacts with APEX1; the interaction stimulates the FOS/JUN AP-1 DNA-binding activity in a redox-dependent manner.

Its subcellular location is the nucleus. It localises to the cytoplasm. It is found in the secreted. Its function is as follows. Participates in various redox reactions through the reversible oxidation of its active center dithiol to a disulfide and catalyzes dithiol-disulfide exchange reactions. Plays a role in the reversible S-nitrosylation of cysteine residues in target proteins, and thereby contributes to the response to intracellular nitric oxide. Nitrosylates the active site Cys of CASP3 in response to nitric oxide (NO), and thereby inhibits caspase-3 activity. Induces the FOS/JUN AP-1 DNA binding activity in ionizing radiation (IR) cells through its oxidation/reduction status and stimulates AP-1 transcriptional activity. This chain is Thioredoxin (TXN), found in Canis lupus familiaris (Dog).